The sequence spans 151 residues: Large ribosomal subunit protein uL13 (151 aa).

Belongs to the universal ribosomal protein uL13 family. Part of the 50S ribosomal subunit.

Its function is as follows. This protein is one of the early assembly proteins of the 50S ribosomal subunit, although it is not seen to bind rRNA by itself. It is important during the early stages of 50S assembly. The chain is Large ribosomal subunit protein uL13 from Petrotoga mobilis (strain DSM 10674 / SJ95).